The chain runs to 525 residues: DNA damage-binding protein CMR1 (525 aa).

2 disordered regions span residues 38–86 (AGIF…AESE) and 212–233 (GILD…EYPD). Residues 53-62 (TKKKPAPKRV) are compositionally biased toward basic residues. WD repeat units lie at residues 183 to 224 (ITRE…DQNE), 241 to 281 (PHTN…ATEA), 288 to 328 (SDDE…KANP), 339 to 379 (LSEK…TKHP), 384 to 425 (EHES…KDWK), 448 to 491 (GKWV…LAQL), and 494 to 525 (DVIT…CLWM). A compositionally biased stretch (acidic residues) spans 223–232 (NESDEEDEYP).

This sequence belongs to the WD repeat DDB2/WDR76 family.

Its function is as follows. DNA-binding protein that binds to both single- and double-stranded DNA. Binds preferentially to UV-damaged DNA. May be involved in DNA-metabolic processes. This chain is DNA damage-binding protein CMR1, found in Coccidioides immitis (strain RS) (Valley fever fungus).